The sequence spans 126 residues: Small ribosomal subunit protein uS12 (126 aa).

The residue at position 89 (D89) is a 3-methylthioaspartic acid.

The protein belongs to the universal ribosomal protein uS12 family. As to quaternary structure, part of the 30S ribosomal subunit. Contacts proteins S8 and S17. May interact with IF1 in the 30S initiation complex.

With S4 and S5 plays an important role in translational accuracy. In terms of biological role, interacts with and stabilizes bases of the 16S rRNA that are involved in tRNA selection in the A site and with the mRNA backbone. Located at the interface of the 30S and 50S subunits, it traverses the body of the 30S subunit contacting proteins on the other side and probably holding the rRNA structure together. The combined cluster of proteins S8, S12 and S17 appears to hold together the shoulder and platform of the 30S subunit. This is Small ribosomal subunit protein uS12 from Carboxydothermus hydrogenoformans (strain ATCC BAA-161 / DSM 6008 / Z-2901).